The sequence spans 379 residues: uncharacterized protein (379 aa).

Disordered regions lie at residues 1-20, 227-290, and 331-371; these read MLPQNSQVVHGVQDGPPVGP, VSQR…LQGH, and PGCA…RAGH. Positions 7–20 are enriched in low complexity; the sequence is QVVHGVQDGPPVGP. Basic and acidic residues predominate over residues 249-261; it reads GCKDPRVRKEPGR.

This is an uncharacterized protein from Dryophytes versicolor (chameleon treefrog).